We begin with the raw amino-acid sequence, 330 residues long: GTPase Obg (330 aa).

Residues 1-159 (MQFIDQARIT…WPLQLELKLL (159 aa)) enclose the Obg domain. Residues 160–328 (AEVGIIGLPN…LLERVWKELG (169 aa)) enclose the OBG-type G domain. ATP-binding positions include 166 to 173 (GLPNAGKS), 191 to 195 (FTTLV), 213 to 216 (DIPG), 280 to 283 (NKQE), and 309 to 311 (SAA). Mg(2+) is bound by residues S173 and T193.

It belongs to the TRAFAC class OBG-HflX-like GTPase superfamily. OBG GTPase family. As to quaternary structure, monomer. Mg(2+) is required as a cofactor.

The protein localises to the cytoplasm. Its function is as follows. An essential GTPase which binds GTP, GDP and possibly (p)ppGpp with moderate affinity, with high nucleotide exchange rates and a fairly low GTP hydrolysis rate. Plays a role in control of the cell cycle, stress response, ribosome biogenesis and in those bacteria that undergo differentiation, in morphogenesis control. This Parasynechococcus marenigrum (strain WH8102) protein is GTPase Obg.